We begin with the raw amino-acid sequence, 365 residues long: tRNA-specific 2-thiouridylase MnmA (365 aa).

ATP is bound by residues 14 to 21 (AMSGGVDS) and Leu-40. Cys-108 serves as the catalytic Nucleophile. The cysteines at positions 108 and 204 are disulfide-linked. Gly-132 lines the ATP pocket. An interaction with tRNA region spans residues 154–156 (KDQ). The active-site Cysteine persulfide intermediate is the Cys-204.

This sequence belongs to the MnmA/TRMU family.

Its subcellular location is the cytoplasm. The enzyme catalyses S-sulfanyl-L-cysteinyl-[protein] + uridine(34) in tRNA + AH2 + ATP = 2-thiouridine(34) in tRNA + L-cysteinyl-[protein] + A + AMP + diphosphate + H(+). Its function is as follows. Catalyzes the 2-thiolation of uridine at the wobble position (U34) of tRNA, leading to the formation of s(2)U34. In Rickettsia peacockii (strain Rustic), this protein is tRNA-specific 2-thiouridylase MnmA.